The following is a 195-amino-acid chain: Probable DNA-directed RNA polymerase subunit delta (195 aa).

The HTH HARE-type domain occupies 14-81 (FALVEIATAI…GNNEWALRAW (68 aa)). Composition is skewed to acidic residues over residues 120–172 (DDDV…DESI) and 181–195 (GGDDLDDLSDGDQEK). Residues 120–195 (DDDVIDYNDD…DDLSDGDQEK (76 aa)) are disordered.

It belongs to the RpoE family. RNAP is composed of a core of 2 alpha, a beta and a beta' subunits. The core is associated with a delta subunit and one of several sigma factors.

Participates in both the initiation and recycling phases of transcription. In the presence of the delta subunit, RNAP displays an increased specificity of transcription, a decreased affinity for nucleic acids, and an increased efficiency of RNA synthesis because of enhanced recycling. This Leuconostoc mesenteroides subsp. mesenteroides (strain ATCC 8293 / DSM 20343 / BCRC 11652 / CCM 1803 / JCM 6124 / NCDO 523 / NBRC 100496 / NCIMB 8023 / NCTC 12954 / NRRL B-1118 / 37Y) protein is Probable DNA-directed RNA polymerase subunit delta.